Here is a 687-residue protein sequence, read N- to C-terminus: Homoaconitase, mitochondrial (687 aa).

The transit peptide at 1-18 (MFAFRNRAVTQTLLVRRY) directs the protein to the mitochondrion. [4Fe-4S] cluster is bound by residues Cys340, Cys400, and Cys403. The segment covering 481–490 (EAEADAEAAE) has biased composition (acidic residues). Residues 481–500 (EAEADAEAAESDPAPSGGVL) are disordered.

It belongs to the aconitase/IPM isomerase family. [4Fe-4S] cluster is required as a cofactor.

It localises to the mitochondrion. The catalysed reaction is (2R,3S)-homoisocitrate = cis-homoaconitate + H2O. It functions in the pathway amino-acid biosynthesis; L-lysine biosynthesis via AAA pathway; L-alpha-aminoadipate from 2-oxoglutarate: step 3/5. Functionally, catalyzes the reversible hydration of cis-homoaconitate to (2R,3S)-homoisocitrate, a step in the alpha-aminoadipate pathway for lysine biosynthesis. This is Homoaconitase, mitochondrial (LYS4) from Yarrowia lipolytica (strain CLIB 122 / E 150) (Yeast).